The primary structure comprises 229 residues: UPF0500 protein C1orf216 (229 aa).

The tract at residues 1-144 (MFAIQPGLAE…RGPGPPDPLL (144 aa)) is disordered. Residues 62–71 (SESPSDNQAF) are compositionally biased toward polar residues. Low complexity-rich tracts occupy residues 84-93 (PPEGAEIPGA) and 115-126 (SSSLSIDSRSSS).

This sequence belongs to the UPF0500 family.

This is UPF0500 protein C1orf216 (C1orf216) from Homo sapiens (Human).